Here is a 74-residue protein sequence, read N- to C-terminus: uncharacterized protein (74 aa).

This is an uncharacterized protein from Bacillus subtilis (strain 168).